A 1289-amino-acid chain; its full sequence is Pesticidal crystal protein Cry5Ab (1289 aa).

The segment at 1263 to 1289 is disordered; the sequence is PLPTDDQNSEGNTASSTNSDTSMNNNQ. Low complexity predominate over residues 1274–1289; the sequence is NTASSTNSDTSMNNNQ.

This sequence belongs to the delta endotoxin family.

Endotoxin with nematicidal activity. The sequence is that of Pesticidal crystal protein Cry5Ab (cry5Ab) from Bacillus thuringiensis subsp. darmstadiensis.